The primary structure comprises 164 residues: Peptide deformylase-like (164 aa).

Glu133 is a catalytic residue.

The protein belongs to the polypeptide deformylase family.

The protein is Peptide deformylase-like of Agrobacterium fabrum (strain C58 / ATCC 33970) (Agrobacterium tumefaciens (strain C58)).